Consider the following 508-residue polypeptide: Photosystem II CP47 reaction center protein (508 aa).

Transmembrane regions (helical) follow at residues 21–36, 101–115, 140–156, 203–218, 237–252, and 457–472; these read SVHI…WAGS, IILA…MWHW, GIHL…FGAF, IAAG…FHLS, VLSS…AFVV, and CFAL…HGAR.

This sequence belongs to the PsbB/PsbC family. PsbB subfamily. In terms of assembly, PSII is composed of 1 copy each of membrane proteins PsbA, PsbB, PsbC, PsbD, PsbE, PsbF, PsbH, PsbI, PsbJ, PsbK, PsbL, PsbM, PsbT, PsbX, PsbY, PsbZ, Psb30/Ycf12, at least 3 peripheral proteins of the oxygen-evolving complex and a large number of cofactors. It forms dimeric complexes. It depends on Binds multiple chlorophylls. PSII binds additional chlorophylls, carotenoids and specific lipids. as a cofactor.

The protein localises to the plastid. It is found in the chloroplast thylakoid membrane. Functionally, one of the components of the core complex of photosystem II (PSII). It binds chlorophyll and helps catalyze the primary light-induced photochemical processes of PSII. PSII is a light-driven water:plastoquinone oxidoreductase, using light energy to abstract electrons from H(2)O, generating O(2) and a proton gradient subsequently used for ATP formation. The protein is Photosystem II CP47 reaction center protein of Mesostigma viride (Green alga).